The primary structure comprises 250 residues: Dihydroorotate dehydrogenase B (NAD(+)), electron transfer subunit (250 aa).

Residues 1–94 (MKVVAQEEIA…MGPQGNGFDL (94 aa)) enclose the FAD-binding FR-type domain. FAD contacts are provided by residues 45–48 (RPIS), 62–64 (IYR), and 69–70 (GT). Residues cysteine 214, cysteine 219, cysteine 222, and cysteine 237 each coordinate [2Fe-2S] cluster.

This sequence belongs to the PyrK family. In terms of assembly, heterotetramer of 2 PyrK and 2 PyrD type B subunits. It depends on [2Fe-2S] cluster as a cofactor. The cofactor is FAD.

Its pathway is pyrimidine metabolism; UMP biosynthesis via de novo pathway; orotate from (S)-dihydroorotate (NAD(+) route): step 1/1. Functionally, responsible for channeling the electrons from the oxidation of dihydroorotate from the FMN redox center in the PyrD type B subunit to the ultimate electron acceptor NAD(+). The polypeptide is Dihydroorotate dehydrogenase B (NAD(+)), electron transfer subunit (Streptococcus pneumoniae serotype 4 (strain ATCC BAA-334 / TIGR4)).